Reading from the N-terminus, the 177-residue chain is NAD(P)H-quinone oxidoreductase subunit 6, chloroplastic (177 aa).

The next 5 helical transmembrane spans lie at 10–30, 32–52, 61–81, 93–115, and 152–172; these read ILLV…VLLT, PIYS…FHIL, AQLL…VMFM, WTVG…IATI, and FFLP…GAIA.

The protein belongs to the complex I subunit 6 family. NDH is composed of at least 16 different subunits, 5 of which are encoded in the nucleus.

The protein resides in the plastid. The protein localises to the chloroplast thylakoid membrane. The catalysed reaction is a plastoquinone + NADH + (n+1) H(+)(in) = a plastoquinol + NAD(+) + n H(+)(out). The enzyme catalyses a plastoquinone + NADPH + (n+1) H(+)(in) = a plastoquinol + NADP(+) + n H(+)(out). NDH shuttles electrons from NAD(P)H:plastoquinone, via FMN and iron-sulfur (Fe-S) centers, to quinones in the photosynthetic chain and possibly in a chloroplast respiratory chain. The immediate electron acceptor for the enzyme in this species is believed to be plastoquinone. Couples the redox reaction to proton translocation, and thus conserves the redox energy in a proton gradient. This Amborella trichopoda protein is NAD(P)H-quinone oxidoreductase subunit 6, chloroplastic (ndhG).